The chain runs to 771 residues: Caldesmon (771 aa).

Disordered regions lie at residues 23–91 (ERLS…ALLE) and 104–599 (LQEA…FSPK). The interval 26-199 (SYQRNDDDEE…PKEVPTEENQ (174 aa)) is myosin and calmodulin-binding. The residue at position 27 (Tyr27) is a Phosphotyrosine. Basic and acidic residues-rich tracts occupy residues 47–67 (QERLRQKEEGDVSGEVTEKSE), 104–115 (LQEALERQKEFD), 139–155 (ITGKEEKVETRQGRCEI), 170–194 (WRQDGEEEGKKEEKDSEEEKPKEVP), 203–215 (AVEKSTDKEEVVE), 240–435 (AADK…ESLP), 442–484 (SKKD…RELT), 509–518 (GSEKLKEKQQ), and 525–592 (DELK…EKKP). 10 repeat units span residues 251 to 265 (EREKLEAEEKERLKA), 266 to 278 (EEEKKAAEEKQKA), 279 to 291 (EEEKKAAEERERA), 294 to 306 (EEEKRAAEERERA), 309 to 321 (EEERKAAEERERA), 324 to 336 (EEERKAAEERAKA), 337 to 349 (EEERKAAEERAKA), 350 to 362 (EEERKAAEERAKA), 363 to 375 (EKERKAAEERERA), and 378 to 390 (EEEKRAAEEKARL). The 10 X 13 AA approximate tandem repeats stretch occupies residues 251–390 (EREKLEAEEK…KRAAEEKARL (140 aa)). Residues 523–580 (ELDELKKRREERRKILEEEEQKKKQEEAERKIREEEEKKRMKEEIERRRAEAAEKRQK) are tropomyosin-binding. Ser597 is subject to Phosphoserine; by CDK1. The interval 612-644 (LNKSAQKSGMKPAHTTAVVSKIDSRLEQYTSAV) is strong actin-binding. The tract at residues 622-632 (KPAHTTAVVSK) is tropomyosin-binding. Phosphotyrosine is present on Tyr640. A calmodulin-binding region spans residues 674–680 (WEKGNVF). The interval 676 to 771 (KGNVFSSPGG…NGLRQFEKEP (96 aa)) is disordered. The segment covering 679–691 (VFSSPGGTGTPNK) has biased composition (polar residues). Position 682 is a phosphoserine; by CDK1 (Ser682). Phosphothreonine; by CDK1 occurs at positions 688 and 711. Ser717 is modified (phosphoserine; by CDK1). Positions 723–742 (SDLRPGDVSGKRNLWEKQSV) are enriched in basic and acidic residues. Residues 726–752 (RPGDVSGKRNLWEKQSVEKPAASSSKV) form a weak actin-binding region.

Belongs to the caldesmon family. In terms of processing, phosphorylated in non-muscle cells. Phosphorylation by CDK1 during mitosis causes caldesmon to dissociate from microfilaments. Phosphorylation reduces caldesmon binding to actin, myosin, and calmodulin as well as its inhibition of actomyosin ATPase activity. Phosphorylation also occurs in both quiescent and dividing smooth muscle cells with similar effects on the interaction with actin and calmodulin and on microfilaments reorganization. High-molecular-weight caldesmon (h-caldesmon) is predominantly expressed in smooth muscles, whereas low-molecular-weight caldesmon (l-caldesmon) is widely distributed in non-muscle tissues and cells. Not expressed in skeletal muscle or heart.

The protein localises to the cytoplasm. It localises to the cytoskeleton. The protein resides in the myofibril. It is found in the stress fiber. Actin- and myosin-binding protein implicated in the regulation of actomyosin interactions in smooth muscle and nonmuscle cells (could act as a bridge between myosin and actin filaments). Stimulates actin binding of tropomyosin which increases the stabilization of actin filament structure. In muscle tissues, inhibits the actomyosin ATPase by binding to F-actin. This inhibition is attenuated by calcium-calmodulin and is potentiated by tropomyosin. Interacts with actin, myosin, two molecules of tropomyosin and with calmodulin. Also plays an essential role during cellular mitosis and receptor capping. The polypeptide is Caldesmon (CALD1) (Gallus gallus (Chicken)).